Reading from the N-terminus, the 295-residue chain is MNIEKGTETVKKGMAQMQKGGVIMDVTTPEQAKIAEKAGAVAVMALEKVPADIRAGGGVARMADPEVIKKIMDAVSIPVMAKARIGHFVEARILENLGVDYIDESEVLTPADEYYHIDKNKFTVPFVCGARNLGEALRRVGEGASMMRTKGEAGTGNVVEAVRHIRTVMDGIRKVQNLPDDELMTEAKNIGAPYDLIKQVKEEGRLPVVNFAAGGVATPADAALMMQLGADGVFVGSGIFKSGDPEKRAKSIVEATLNYDNYDVLADVSSGLGEAMVGINVSDLEEQERMQNRGW.

D25 is a binding site for D-ribose 5-phosphate. K82 (schiff-base intermediate with D-ribose 5-phosphate) is an active-site residue. Residue G154 participates in D-ribose 5-phosphate binding. Residue R166 participates in D-glyceraldehyde 3-phosphate binding. Residues G215 and 236–237 (GS) contribute to the D-ribose 5-phosphate site.

It belongs to the PdxS/SNZ family. As to quaternary structure, in the presence of PdxT, forms a dodecamer of heterodimers.

The enzyme catalyses aldehydo-D-ribose 5-phosphate + D-glyceraldehyde 3-phosphate + L-glutamine = pyridoxal 5'-phosphate + L-glutamate + phosphate + 3 H2O + H(+). It participates in cofactor biosynthesis; pyridoxal 5'-phosphate biosynthesis. Functionally, catalyzes the formation of pyridoxal 5'-phosphate from ribose 5-phosphate (RBP), glyceraldehyde 3-phosphate (G3P) and ammonia. The ammonia is provided by the PdxT subunit. Can also use ribulose 5-phosphate and dihydroxyacetone phosphate as substrates, resulting from enzyme-catalyzed isomerization of RBP and G3P, respectively. The protein is Pyridoxal 5'-phosphate synthase subunit PdxS of Natranaerobius thermophilus (strain ATCC BAA-1301 / DSM 18059 / JW/NM-WN-LF).